The following is a 270-amino-acid chain: Phosphatidylglycerol--prolipoprotein diacylglyceryl transferase (270 aa).

Helical transmembrane passes span 18 to 38 (IAVH…LWLA), 55 to 75 (LVLF…VIFQ), 89 to 109 (IWNG…TGII), and 115 to 135 (GLSF…GQAI). R137 serves as a coordination point for a 1,2-diacyl-sn-glycero-3-phospho-(1'-sn-glycerol). Helical transmembrane passes span 177–197 (QPTF…LLLL), 205–225 (GELF…IEGL), and 236–256 (LRIA…LIAY).

The protein belongs to the Lgt family.

The protein localises to the cell membrane. It catalyses the reaction L-cysteinyl-[prolipoprotein] + a 1,2-diacyl-sn-glycero-3-phospho-(1'-sn-glycerol) = an S-1,2-diacyl-sn-glyceryl-L-cysteinyl-[prolipoprotein] + sn-glycerol 1-phosphate + H(+). Its pathway is protein modification; lipoprotein biosynthesis (diacylglyceryl transfer). Its function is as follows. Catalyzes the transfer of the diacylglyceryl group from phosphatidylglycerol to the sulfhydryl group of the N-terminal cysteine of a prolipoprotein, the first step in the formation of mature lipoproteins. This Bacillus licheniformis (strain ATCC 14580 / DSM 13 / JCM 2505 / CCUG 7422 / NBRC 12200 / NCIMB 9375 / NCTC 10341 / NRRL NRS-1264 / Gibson 46) protein is Phosphatidylglycerol--prolipoprotein diacylglyceryl transferase.